The chain runs to 934 residues: MSAHDLKLEEIVNAETLRRKLNELADTADESYTSLPMRKVVLQTLKDALASGRANAEDMLMKDGGGTLCAKRLCYLMDTLIDILFEFATTRTYPTRNPSKAENMALVAVGGYGRGGLAQGSDIDLLFLLPYKQTPWGEQVVEYTLYMLWDMGLKVGHSTRNIDECIRLAREDMTIRTALLDARFLTGDKDLFRTLEIRFEEEIVKGTEPEFIQAKLAERDARHRKAGETRYLVEPNVKEGKGGQRDLHTLFWITKYFYRVKTKEELVKLGVLSRAELKLFNKAEDFLWAVRCHMHFATLKAEERLSFDIQPEIAQRLGYTAHPGQNYVERFMKHYFLVAKDVGDLTRIICAALEEQQAKHVPGFNRIFLTFSRRKRKLSDDGAFISENHRINIARPDIFRQDPVNMIRLFHLADRHGLEFHPEAMQSLTRSLKLINADLRENPEANRLFLEILTSPRNPELILRRMNESGVLGKFIPDFGKIVAMMQFNMYHHYTVDEHLLRCIAVLSEIEHGELKTEHPLSNHLITTIKRDRNLLYVTLLLHDIAKGRPEDHSIAGARIARRLCPRFGLTPSETETVEWLVREHLTMSMVAQSRDLNDRKTIIDFADTVQTMERLKLLLILTVCDIKAVGPGIWNGWKGQLLRTLFYETELVLTGGFSELSRAARDKQAREALAERLSDWPKEERDAYLALPYTNYFLTVSLDDQVRHAHFIRDADQQGRALVTMAKPHAFEAVTEITVLAPDHPRLLSVITGACAAAGGNIVDAQIFTTSDGRALDTILISREFDTDDDERRRAERVGKVIEDVLSGKAHLPDMLAKRTKPKKAARAFKVEPRVEINNTLSNKFTVIEVEGLDRPGLLSELTGLISDLSLDIASAHITTFGEKVIDSFYVTDLVGHKISNATRQGNIKRKLLALLGAENGARTNGRSPQAAA.

The tract at residues 1–379 is uridylyltransferase; that stretch reads MSAHDLKLEE…TFSRRKRKLS (379 aa). The tract at residues 380 to 736 is uridylyl-removing; sequence DDGAFISENH…AKPHAFEAVT (357 aa). One can recognise an HD domain in the interval 496 to 613; that stretch reads VDEHLLRCIA…IDFADTVQTM (118 aa). ACT domains lie at 737–818 and 848–931; these read EITV…DMLA and VIEV…RSPQ.

Belongs to the GlnD family. It depends on Mg(2+) as a cofactor.

The enzyme catalyses [protein-PII]-L-tyrosine + UTP = [protein-PII]-uridylyl-L-tyrosine + diphosphate. The catalysed reaction is [protein-PII]-uridylyl-L-tyrosine + H2O = [protein-PII]-L-tyrosine + UMP + H(+). With respect to regulation, uridylyltransferase (UTase) activity is inhibited by glutamine, while glutamine activates uridylyl-removing (UR) activity. Its function is as follows. Modifies, by uridylylation and deuridylylation, the PII regulatory proteins (GlnB and homologs), in response to the nitrogen status of the cell that GlnD senses through the glutamine level. Under low glutamine levels, catalyzes the conversion of the PII proteins and UTP to PII-UMP and PPi, while under higher glutamine levels, GlnD hydrolyzes PII-UMP to PII and UMP (deuridylylation). Thus, controls uridylylation state and activity of the PII proteins, and plays an important role in the regulation of nitrogen assimilation and metabolism. This Brucella suis (strain ATCC 23445 / NCTC 10510) protein is Bifunctional uridylyltransferase/uridylyl-removing enzyme.